An 88-amino-acid chain; its full sequence is Toxin RelE2 (88 aa).

It belongs to the RelE toxin family.

Its function is as follows. Toxic component of a type II toxin-antitoxin (TA) system. Its toxic effect is neutralized by coexpression with cognate antitoxin RelB2 but no other ParD or RelB antitoxin. In Caulobacter vibrioides (strain ATCC 19089 / CIP 103742 / CB 15) (Caulobacter crescentus), this protein is Toxin RelE2 (relE2).